Here is a 520-residue protein sequence, read N- to C-terminus: 2-isopropylmalate synthase (520 aa).

The 263-residue stretch at 12–274 folds into the Pyruvate carboxyltransferase domain; it reads IRIFDTTLRD…DSAINTPRIV (263 aa). Mn(2+) contacts are provided by D21, H209, H211, and N245. The regulatory domain stretch occupies residues 396-520; the sequence is RLASMTISDV…VIAGKTAAVA (125 aa).

Belongs to the alpha-IPM synthase/homocitrate synthase family. LeuA type 1 subfamily. As to quaternary structure, homodimer. The cofactor is Mn(2+).

The protein resides in the cytoplasm. It carries out the reaction 3-methyl-2-oxobutanoate + acetyl-CoA + H2O = (2S)-2-isopropylmalate + CoA + H(+). It functions in the pathway amino-acid biosynthesis; L-leucine biosynthesis; L-leucine from 3-methyl-2-oxobutanoate: step 1/4. Catalyzes the condensation of the acetyl group of acetyl-CoA with 3-methyl-2-oxobutanoate (2-ketoisovalerate) to form 3-carboxy-3-hydroxy-4-methylpentanoate (2-isopropylmalate). The protein is 2-isopropylmalate synthase of Xanthomonas oryzae pv. oryzae (strain MAFF 311018).